Here is a 207-residue protein sequence, read N- to C-terminus: Proteasome subunit beta (207 aa).

Positions 1-7 (MVEAFKG) are cleaved as a propeptide — removed in mature form; by autocatalysis. Threonine 8 (nucleophile) is an active-site residue.

This sequence belongs to the peptidase T1B family. In terms of assembly, the 20S proteasome core is composed of 14 alpha and 14 beta subunits that assemble into four stacked heptameric rings, resulting in a barrel-shaped structure. The two inner rings, each composed of seven catalytic beta subunits, are sandwiched by two outer rings, each composed of seven alpha subunits. The catalytic chamber with the active sites is on the inside of the barrel. Has a gated structure, the ends of the cylinder being occluded by the N-termini of the alpha-subunits. Is capped at one or both ends by the proteasome regulatory ATPase, PAN.

It is found in the cytoplasm. The enzyme catalyses Cleavage of peptide bonds with very broad specificity.. With respect to regulation, the formation of the proteasomal ATPase PAN-20S proteasome complex, via the docking of the C-termini of PAN into the intersubunit pockets in the alpha-rings, triggers opening of the gate for substrate entry. Interconversion between the open-gate and close-gate conformations leads to a dynamic regulation of the 20S proteasome proteolysis activity. Functionally, component of the proteasome core, a large protease complex with broad specificity involved in protein degradation. This is Proteasome subunit beta from Methanothrix thermoacetophila (strain DSM 6194 / JCM 14653 / NBRC 101360 / PT) (Methanosaeta thermophila).